We begin with the raw amino-acid sequence, 416 residues long: Squamosa promoter-binding-like protein 8 (416 aa).

Positions 11–51 (SSCDDFGYNATPPPPPSLLPIMDQDGGGGSIQRDHHQHHNH) are disordered. The SBP-type zinc finger occupies 182–260 (PPRCQAEGCK…ADHNRRRRKS (79 aa)). Positions 185, 190, 207, 210, 227, 230, 234, and 246 each coordinate Zn(2+). The Bipartite nuclear localization signal signature appears at 243–259 (KKSCRKRLADHNRRRRK). Residues 250–299 (LADHNRRRRKSKPSDGEHSGEKRRAQANKSAATKDKAGSSSKNAGIGDGF) are disordered. Basic and acidic residues predominate over residues 261–273 (KPSDGEHSGEKRR).

In terms of tissue distribution, expressed in stems, leaf sheaths, and young panicles. Weakly expressed in ligules, auricles, and leaf sheaths at the basal region.

The protein localises to the nucleus. Its function is as follows. Probable transcription factor that plays an important role in building the laminar joint between leaf blade and leaf sheath boundary, thereby controlling ligule and auricle development. The sequence is that of Squamosa promoter-binding-like protein 8 (SPL8) from Oryza sativa subsp. japonica (Rice).